We begin with the raw amino-acid sequence, 176 residues long: NAD(P)H-quinone oxidoreductase subunit 6, chloroplastic (176 aa).

The next 5 membrane-spanning stretches (helical) occupy residues 10–30 (FILV…VFFT), 32–52 (TIFS…FYIL), 63–83 (LLIY…FMNG), 92–112 (VWTV…ISQI), and 152–172 (FFLP…GAIF).

Belongs to the complex I subunit 6 family. NDH is composed of at least 16 different subunits, 5 of which are encoded in the nucleus.

It is found in the plastid. Its subcellular location is the chloroplast thylakoid membrane. It catalyses the reaction a plastoquinone + NADH + (n+1) H(+)(in) = a plastoquinol + NAD(+) + n H(+)(out). It carries out the reaction a plastoquinone + NADPH + (n+1) H(+)(in) = a plastoquinol + NADP(+) + n H(+)(out). Its function is as follows. NDH shuttles electrons from NAD(P)H:plastoquinone, via FMN and iron-sulfur (Fe-S) centers, to quinones in the photosynthetic chain and possibly in a chloroplast respiratory chain. The immediate electron acceptor for the enzyme in this species is believed to be plastoquinone. Couples the redox reaction to proton translocation, and thus conserves the redox energy in a proton gradient. The chain is NAD(P)H-quinone oxidoreductase subunit 6, chloroplastic (ndhG) from Phaseolus vulgaris (Kidney bean).